The chain runs to 215 residues: uncharacterized protein (215 aa).

The first 17 residues, 1–17 (MKKVLASATILSLMLVG), serve as a signal peptide directing secretion. The interval 17 to 110 (GCSNGGNDES…NKQQQSVQDN (94 aa)) is disordered. C18 is lipidated: N-palmitoyl cysteine. Residue C18 is the site of S-diacylglycerol cysteine attachment. Positions 25 to 62 (ESSHKDDSSKTEQKDKSSSQHDSKKDSKRNDTNNKQDN) are enriched in basic and acidic residues. Composition is skewed to low complexity over residues 63-76 (QENN…NNQN) and 91-110 (NSNG…VQDN).

The protein resides in the cell membrane. This is an uncharacterized protein from Staphylococcus epidermidis (strain ATCC 35984 / DSM 28319 / BCRC 17069 / CCUG 31568 / BM 3577 / RP62A).